Consider the following 885-residue polypeptide: Protein kintoun (885 aa).

Disordered regions lie at residues 208–235 (LSKN…ADAG), 371–390 (LSRE…PVED), 607–636 (ELQQ…ESAC), 644–663 (EHHE…QRSY), 781–806 (RRLS…QPAH), and 819–871 (NNNH…MMFE). A compositionally biased stretch (basic and acidic residues) spans 213–232 (TAEEKEPHPLEHMYPKKPEA). Ser-376 bears the Phosphoserine mark. Over residues 612 to 629 (HHQKKLNKKQRKRNKKQR) the composition is skewed to basic residues. Ser-784 carries the phosphoserine modification. The span at 824–837 (HVKDNKKQSLHDSG) shows a compositional bias: basic and acidic residues. The segment covering 842–855 (NGSINNKNNHSNEN) has biased composition (low complexity).

Belongs to the PIH1 family. Kintoun subfamily. In terms of assembly, interacts with Pp1alpha-96A, Pp1-87B, Pp1-13C and flw.

It is found in the cytoplasm. Required for cytoplasmic pre-assembly of axonemal dyneins, thereby playing a central role in motility in cilia and flagella. Involved in pre-assembly of dynein arm complexes in the cytoplasm before intraflagellar transport loads them for the ciliary compartment. The chain is Protein kintoun from Drosophila mojavensis (Fruit fly).